A 201-amino-acid chain; its full sequence is Peptide deformylase (201 aa).

Over residues 1–17 the composition is skewed to polar residues; it reads MANNFSQLARKSKTNSP. Residues 1–24 are disordered; that stretch reads MANNFSQLARKSKTNSPIEKVSKE. Residues Cys121 and His163 each coordinate Fe cation. Glu164 is a catalytic residue. His167 is a binding site for Fe cation.

The protein belongs to the polypeptide deformylase family. Fe(2+) is required as a cofactor.

It carries out the reaction N-terminal N-formyl-L-methionyl-[peptide] + H2O = N-terminal L-methionyl-[peptide] + formate. Its function is as follows. Removes the formyl group from the N-terminal Met of newly synthesized proteins. Requires at least a dipeptide for an efficient rate of reaction. N-terminal L-methionine is a prerequisite for activity but the enzyme has broad specificity at other positions. This Prochlorococcus marinus subsp. pastoris (strain CCMP1986 / NIES-2087 / MED4) protein is Peptide deformylase.